Here is a 401-residue protein sequence, read N- to C-terminus: Elongation factor Tu 2 (401 aa).

The 200-residue stretch at 10 to 209 (KPHVNVGTIG…AVDEYIPTPV (200 aa)) folds into the tr-type G domain. The G1 stretch occupies residues 19–26 (GHVDHGKT). 19–26 (GHVDHGKT) contacts GTP. Position 26 (threonine 26) interacts with Mg(2+). The interval 60–64 (GITIA) is G2. Residues 81–84 (DCPG) form a G3 region. Residues 81–85 (DCPGH) and 136–139 (NKVD) each bind GTP. A G4 region spans residues 136 to 139 (NKVD). The G5 stretch occupies residues 174 to 176 (SAL).

Belongs to the TRAFAC class translation factor GTPase superfamily. Classic translation factor GTPase family. EF-Tu/EF-1A subfamily. Monomer.

The protein localises to the cytoplasm. The catalysed reaction is GTP + H2O = GDP + phosphate + H(+). GTP hydrolase that promotes the GTP-dependent binding of aminoacyl-tRNA to the A-site of ribosomes during protein biosynthesis. The polypeptide is Elongation factor Tu 2 (Roseiflexus castenholzii (strain DSM 13941 / HLO8)).